Here is a 158-residue protein sequence, read N- to C-terminus: MGVEGILEKGFVTTTADKLINYTRTGSLWPMTFGLACCAVEMMHAGAARYDLDRFGVVFRPSPRQSDLMIVAGTLCNKMAPALRKVYDQMAEPRWVISMGSCANGGGYYHYSYSVVRGCDRIVPVDVYVPGCPPTAEALLYGIIQLQNKIKRTNTIAR.

4 residues coordinate [4Fe-4S] cluster: Cys37, Cys38, Cys102, and Cys132.

It belongs to the complex I 20 kDa subunit family. In terms of assembly, NDH-1 is composed of 14 different subunits. Subunits NuoB, C, D, E, F, and G constitute the peripheral sector of the complex. [4Fe-4S] cluster is required as a cofactor.

The protein resides in the cell inner membrane. The enzyme catalyses a quinone + NADH + 5 H(+)(in) = a quinol + NAD(+) + 4 H(+)(out). Its function is as follows. NDH-1 shuttles electrons from NADH, via FMN and iron-sulfur (Fe-S) centers, to quinones in the respiratory chain. Couples the redox reaction to proton translocation (for every two electrons transferred, four hydrogen ions are translocated across the cytoplasmic membrane), and thus conserves the redox energy in a proton gradient. This Chromobacterium violaceum (strain ATCC 12472 / DSM 30191 / JCM 1249 / CCUG 213 / NBRC 12614 / NCIMB 9131 / NCTC 9757 / MK) protein is NADH-quinone oxidoreductase subunit B 1.